Reading from the N-terminus, the 313-residue chain is Aspartate carbamoyltransferase catalytic subunit (313 aa).

Carbamoyl phosphate-binding residues include Arg-59 and Thr-60. Lys-87 contributes to the L-aspartate binding site. Carbamoyl phosphate-binding residues include Arg-109, His-137, and Gln-140. L-aspartate is bound by residues Arg-170 and Arg-224. Residues Gly-265 and Pro-266 each coordinate carbamoyl phosphate.

The protein belongs to the aspartate/ornithine carbamoyltransferase superfamily. ATCase family. As to quaternary structure, heterododecamer (2C3:3R2) of six catalytic PyrB chains organized as two trimers (C3), and six regulatory PyrI chains organized as three dimers (R2).

It catalyses the reaction carbamoyl phosphate + L-aspartate = N-carbamoyl-L-aspartate + phosphate + H(+). It participates in pyrimidine metabolism; UMP biosynthesis via de novo pathway; (S)-dihydroorotate from bicarbonate: step 2/3. In terms of biological role, catalyzes the condensation of carbamoyl phosphate and aspartate to form carbamoyl aspartate and inorganic phosphate, the committed step in the de novo pyrimidine nucleotide biosynthesis pathway. The polypeptide is Aspartate carbamoyltransferase catalytic subunit (Agrobacterium fabrum (strain C58 / ATCC 33970) (Agrobacterium tumefaciens (strain C58))).